Here is a 263-residue protein sequence, read N- to C-terminus: Endolytic peptidoglycan transglycosylase RlpA (263 aa).

A signal peptide spans 1–16; sequence MNRIYLYLLIVLILAG. A lipid anchor (N-palmitoyl cysteine) is attached at Cys17. Cys17 is lipidated: S-diacylglycerol cysteine. An SPOR domain is found at 182-257; that stretch reads KNNALEYVIQ…AGYDSAFIKT (76 aa).

The protein belongs to the RlpA family.

It localises to the cell membrane. Its function is as follows. Lytic transglycosylase with a strong preference for naked glycan strands that lack stem peptides. The sequence is that of Endolytic peptidoglycan transglycosylase RlpA from Vibrio cholerae serotype O1 (strain ATCC 39315 / El Tor Inaba N16961).